Here is a 280-residue protein sequence, read N- to C-terminus: UDP-3-O-acyl-N-acetylglucosamine deacetylase (280 aa).

Zn(2+) contacts are provided by His77, His238, and Asp242. His265 functions as the Proton donor in the catalytic mechanism.

It belongs to the LpxC family. Requires Zn(2+) as cofactor.

The catalysed reaction is a UDP-3-O-[(3R)-3-hydroxyacyl]-N-acetyl-alpha-D-glucosamine + H2O = a UDP-3-O-[(3R)-3-hydroxyacyl]-alpha-D-glucosamine + acetate. It functions in the pathway glycolipid biosynthesis; lipid IV(A) biosynthesis; lipid IV(A) from (3R)-3-hydroxytetradecanoyl-[acyl-carrier-protein] and UDP-N-acetyl-alpha-D-glucosamine: step 2/6. Catalyzes the hydrolysis of UDP-3-O-myristoyl-N-acetylglucosamine to form UDP-3-O-myristoylglucosamine and acetate, the committed step in lipid A biosynthesis. The sequence is that of UDP-3-O-acyl-N-acetylglucosamine deacetylase from Nostoc sp. (strain PCC 7120 / SAG 25.82 / UTEX 2576).